The following is a 2210-amino-acid chain: RNA-directed RNA polymerase L (2210 aa).

An endonuclease region spans residues 26–284 (RDIFLSQHHP…SHKDSDVPSC (259 aa)). Mn(2+)-binding residues include E51, D89, and E102. Residue K115 is part of the active site. The RdRp catalytic domain maps to 1171–1368 (CDMKMAVNNG…FLSSKLNKFI (198 aa)). Residue D1329 participates in Mg(2+) binding.

It belongs to the Bunyavirales RNA polymerase family. In terms of assembly, homomultimer; the oligomeric structure is essential for the polymerase activity. Interacts with nucleoprotein N. Interacts with protein Z; this interaction inhibits viral transcription and replication, Z partially blocks the product exit tunnel for the releasing nascent RNA product. Mn(2+) is required as a cofactor. The cofactor is Mg(2+).

The protein localises to the virion. It localises to the host cytoplasm. The enzyme catalyses RNA(n) + a ribonucleoside 5'-triphosphate = RNA(n+1) + diphosphate. Functionally, RNA-dependent RNA polymerase, which is responsible for the replication and transcription of the viral RNA genome using antigenomic RNA as an intermediate. During transcription, synthesizes subgenomic RNAs and assures their capping by a cap-snatching mechanism, which involves the endonuclease activity cleaving the host capped pre-mRNAs. These short capped RNAs are then used as primers for viral transcription. The 3'-end of subgenomic mRNAs molecules are heterogeneous and not polyadenylated. The replicase function is to direct synthesis of antigenomic and genomic RNA which are encapsidated and non capped. As a consequence of the use of the same enzyme for both transcription and replication, these mechanisms need to be well coordinated. These processes may be regulated by proteins N and Z in a dose-dependent manner. Z protein inhibits the viral polymerase L und thus the viral transcription and RNA synthesis. In Junin mammarenavirus (JUNV), this protein is RNA-directed RNA polymerase L.